Consider the following 798-residue polypeptide: Integrin beta-1 (798 aa).

Positions 1-20 (MNLQPIFWIGLISSICCVFA) are cleaved as a signal peptide. Residues 26–76 (RCLKANAKSCGECIQAGPNCGWCTNSTFLQEGMPTSARCDDLEALKKKGCP) form the PSI domain. Disulfide bonds link Cys-27-Cys-45, Cys-35-Cys-464, Cys-38-Cys-64, Cys-48-Cys-75, Cys-207-Cys-213, Cys-261-Cys-301, Cys-401-Cys-415, Cys-435-Cys-462, Cys-466-Cys-486, Cys-477-Cys-489, Cys-491-Cys-500, Cys-502-Cys-533, Cys-516-Cys-531, Cys-525-Cys-536, Cys-538-Cys-553, Cys-555-Cys-576, Cys-560-Cys-574, Cys-568-Cys-579, Cys-581-Cys-590, Cys-592-Cys-615, Cys-599-Cys-613, Cys-607-Cys-618, Cys-620-Cys-630, Cys-633-Cys-636, Cys-640-Cys-691, Cys-646-Cys-665, Cys-649-Cys-661, and Cys-699-Cys-723. Asn-50 carries an N-linked (GlcNAc...) asparagine glycan. The segment at 75 to 107 (CPPDDIENPRGSKDIKKNKNVTNRSKGTAEKLK) is disordered. A compositionally biased stretch (basic and acidic residues) spans 81–91 (ENPRGSKDIKK). Asn-94 and Asn-97 each carry an N-linked (GlcNAc...) asparagine glycan. One can recognise a VWFA domain in the interval 140–378 (DYPIDLYYLM…QLIIDAYNSL (239 aa)). Mg(2+) contacts are provided by Ser-152 and Ser-154. Positions 154, 157, 158, and 189 each coordinate Ca(2+). Residues 207 to 213 (CTSEQNC) form a CX3CL1-binding region. Asn-212 is a glycosylation site (N-linked (GlcNAc...) asparagine). Ca(2+) contacts are provided by Asn-244, Asp-246, Pro-248, and Glu-249. Residue Glu-249 coordinates Mg(2+). A glycan (N-linked (GlcNAc...) asparagine) is linked at Asn-269. The segment at 295–314 (LPNDGQCHLENNMYTMSHYY) is CX3CL1-binding. Ala-362 contributes to the Ca(2+) binding site. N-linked (GlcNAc...) asparagine glycosylation is found at Asn-363, Asn-406, and Asn-417. The segment at 383 to 465 (ILENSKLSEG…VILQYICECE (83 aa)) is interaction with TMEM182. I-EGF domains follow at residues 466 to 501 (CQSE…RHCE), 502 to 554 (CSTD…KFCE), 555 to 591 (CDNF…SACD), and 592 to 631 (CSLD…QTCE). N-linked (GlcNAc...) asparagine glycosylation occurs at Asn-481. An N-linked (GlcNAc...) asparagine glycan is attached at Asn-520. Residue Asn-584 is glycosylated (N-linked (GlcNAc...) asparagine). N-linked (GlcNAc...) asparagine glycosylation occurs at Asn-669. A helical transmembrane segment spans residues 729–749 (IIPIVAGVVAGIVLIGLALLL). The signal for sorting from recycling endosomes; interaction with ACAP1 stretch occupies residues 762 to 767 (EFAKFE). At Thr-777 the chain carries Phosphothreonine. Position 783 is a phosphotyrosine (Tyr-783). Ser-785 is modified (phosphoserine). Residues 785 to 792 (SAVTTVVN) are interaction with ITGB1BP1. Residue Thr-789 is modified to Phosphothreonine. N6-acetyllysine; alternate is present on Lys-794. Residue Lys-794 forms a Glycyl lysine isopeptide (Lys-Gly) (interchain with G-Cter in SUMO1); alternate linkage.

The protein belongs to the integrin beta chain family. As to quaternary structure, interacts with seprase FAP (seprase); the interaction occurs at the cell surface of invadopodia membrane in a collagen-dependent manner. Heterodimer of an alpha and a beta subunit. Beta-1 associates with either alpha-1, alpha-2, alpha-3, alpha-4, alpha-5, alpha-6, alpha-7, alpha-8, alpha-9, alpha-10, alpha-11 or alpha-V. ITGA6:ITGB1 is found in a complex with CD9; interaction takes place in oocytes and is involved in sperm-egg fusion. Binds LGALS3BP and NMRK2, when associated with alpha-7, but not with alpha-5. Interacts with FLNA, FLNB, FLNC and RANBP9. Interacts with KRT1 in the presence of RACK1 and SRC. Interacts with JAML; integrin alpha-4/beta-1 may regulate leukocyte to endothelial cells adhesion by controlling JAML homodimerization. Interacts with RAB21. Interacts (via the cytoplasmic region) with RAB25 (via the hypervariable C-terminal region). Interacts with MYO10. Interacts with ITGB1BP1 (via C-terminal region); the interaction is a prerequisite for focal adhesion disassembly. Interacts with TLN1; the interaction is prevented by competitive binding of ITGB1BP1. Interacts with ACAP1; required for ITGB1 recycling. Interacts with ASAP3. Interacts with FERMT2; the interaction is inhibited in presence of ITGB1BP1. Interacts with DAB2. Interacts with FGR and HCK. Interacts with alpha-7A and alpha-7B in adult skeletal muscle. Interacts with alpha-7B in cardiomyocytes of adult heart. Interacts with EMP2; the interaction may be direct or indirect and ITGB1 has a heterodimer form. ITGA5:ITGB1 interacts with CCN3. ITGA4:ITGB1 is found in a ternary complex with CX3CR1 and CX3CL1. ITGA5:ITGB1 interacts with FBN1. ITGA5:ITGB1 acts as a receptor for fibronectin FN1 and mediates R-G-D-dependent cell adhesion to FN1. ITGA5:ITGB1 interacts with IL1B. Interacts with MDK. ITGA4:ITGB1 interacts with MDK; this interaction mediates MDK-induced osteoblast cells migration through PXN phosphorylation. ITGA6:ITGB1 interacts with MDK; this interaction mediates MDK-induced neurite-outgrowth. ITGA5:ITGB1 interacts with ACE2. Interacts with TMEM182 and LAMB1. Interacts with tensin TNS3; TNS3 also interacts with PEAK1, thus acting as an adapter molecule to bridge the association of PEAK1 with ITGB1. Interacts with tensin TNS4; the interaction displaces tensin TNS3 from the ITGB1 cytoplasmic tail and promotes ITGB1 stability. Integrin ITGA9:ITGB1 interacts with SPP1/OPN (via N-terminus). Integrin ITGA9:ITGB1 interacts with TNC/TNFN3 (via the 3rd Fibronectin type-III domain). Integrins ITGA4:ITGB1 and ITGA9:ITGB1 interact with SVEP1 (via Sushi domain 21); thereby inhibit Ca(2+) intracellular signaling and as a result repress vasocontraction. ITGA4:ITGB1 and ITGA5:ITGB1 interacts with SELP. Interacts with CD248. ITGA5:ITGB1 interacts with IGFBP1. ITGA4:ITGB1 interacts with BCAM. Interacts with ADGRG6.

The protein resides in the cell membrane. It localises to the cell projection. The protein localises to the invadopodium membrane. It is found in the ruffle membrane. Its subcellular location is the recycling endosome. The protein resides in the melanosome. It localises to the lamellipodium. The protein localises to the ruffle. It is found in the cell junction. Its subcellular location is the focal adhesion. Functionally, integrins alpha-1/beta-1, alpha-2/beta-1, alpha-10/beta-1 and alpha-11/beta-1 are receptors for collagen. Integrins alpha-1/beta-1 and alpha-2/beta-2 recognize the proline-hydroxylated sequence G-F-P-G-E-R in collagen. Integrins alpha-2/beta-1, alpha-3/beta-1, alpha-4/beta-1, alpha-5/beta-1, alpha-8/beta-1, alpha-10/beta-1, alpha-11/beta-1 and alpha-V/beta-1 are receptors for fibronectin. Alpha-4/beta-1 recognizes one or more domains within the alternatively spliced CS-1 and CS-5 regions of fibronectin. Integrin alpha-5/beta-1 is a receptor for fibrinogen. Integrin alpha-1/beta-1, alpha-2/beta-1, alpha-6/beta-1 and alpha-7/beta-1 are receptors for lamimin. Integrin alpha-6/beta-1 (ITGA6:ITGB1) is present in oocytes and is involved in sperm-egg fusion. Integrin alpha-4/beta-1 is a receptor for VCAM1 and recognizes the sequence Q-I-D-S in VCAM1. Integrin alpha-9/beta-1 is a receptor for VCAM1, cytotactin and osteopontin. It recognizes the sequence A-E-I-D-G-I-E-L in cytotactin. Integrin alpha-3/beta-1 is a receptor for epiligrin, thrombospondin and CSPG4. Integrin alpha-3/beta-1 provides a docking site for FAP (seprase) at invadopodia plasma membranes in a collagen-dependent manner and hence may participate in the adhesion, formation of invadopodia and matrix degradation processes, promoting cell invasion. Alpha-3/beta-1 may mediate with LGALS3 the stimulation by CSPG4 of endothelial cells migration. Integrin alpha-V/beta-1 is a receptor for vitronectin. Beta-1 integrins recognize the sequence R-G-D in a wide array of ligands. When associated with alpha-7/beta-1 integrin, regulates cell adhesion and laminin matrix deposition. Involved in promoting endothelial cell motility and angiogenesis. Involved in osteoblast compaction through the fibronectin fibrillogenesis cell-mediated matrix assembly process and the formation of mineralized bone nodules. May be involved in up-regulation of the activity of kinases such as PKC via binding to KRT1. Together with KRT1 and RACK1, serves as a platform for SRC activation or inactivation. Plays a mechanistic adhesive role during telophase, required for the successful completion of cytokinesis. ITGA4:ITGB1 binds to fractalkine (CX3CL1) and may act as its coreceptor in CX3CR1-dependent fractalkine signaling. ITGA4:ITGB1 and ITGA5:ITGB1 bind to PLA2G2A via a site (site 2) which is distinct from the classical ligand-binding site (site 1) and this induces integrin conformational changes and enhanced ligand binding to site 1. ITGA5:ITGB1 acts as a receptor for fibrillin-1 (FBN1) and mediates R-G-D-dependent cell adhesion to FBN1. ITGA5:ITGB1 is a receptor for IL1B and binding is essential for IL1B signaling. ITGA5:ITGB3 is a receptor for soluble CD40LG and is required for CD40/CD40LG signaling. Plays an important role in myoblast differentiation and fusion during skeletal myogenesis. ITGA9:ITGB1 may play a crucial role in SVEP1/polydom-mediated myoblast cell adhesion. Integrins ITGA9:ITGB1 and ITGA4:ITGB1 repress PRKCA-mediated L-type voltage-gated channel Ca(2+) influx and ROCK-mediated calcium sensitivity in vascular smooth muscle cells via their interaction with SVEP1, thereby inhibit vasocontraction. The chain is Integrin beta-1 (ITGB1) from Pongo abelii (Sumatran orangutan).